The sequence spans 261 residues: Polycomb group RING finger protein 1 (261 aa).

The RING-type zinc finger occupies 45 to 84 (CYLCAGYFIDATTITECLHTFCKSCIVKYLQTSKYCPMCN).

In terms of assembly, component of a PRC1-like complex.

The protein resides in the nucleus. In terms of biological role, component of a Polycomb group (PcG) multiprotein PRC1-like complex, a complex class required to maintain the transcriptionally repressive state of many genes, including Hox genes, throughout development. PcG PRC1 complex acts via chromatin remodeling and modification of histones; it mediates monoubiquitination of histone H2A 'Lys-119', rendering chromatin heritably changed in its expressibility. This is Polycomb group RING finger protein 1 (pcgf1) from Danio rerio (Zebrafish).